Consider the following 514-residue polypeptide: Cilia- and flagella-associated protein 53 (514 aa).

2 coiled-coil regions span residues 91–176 (VINT…EKKV) and 205–478 (WEED…AGLA). 2 disordered regions span residues 261–296 (QNKAQIKREDEQEKLQKQKRRQETRSSLKKAVQDKI) and 495–514 (QALSQNVHPMRRGYPDKPPL).

This sequence belongs to the CFAP53 family. Microtubule inner protein component of sperm flagellar doublet microtubules. Interacts with PIERCE1 and PIERCE2; the interactions link outer dynein arms docking complex (ODA-DC) to the internal microtubule inner proteins (MIP) in cilium axoneme. Interacts with CCDC38. Interacts with CCDC42 and IFT88. Interacts with centriolar satellite proteins PIBF1/CEP90 and PCM1. Interacts with dyneins DNAIC1, DNAIC2 AND DNAH11 and with ODA-DC component ODAD4/TTC25. As to expression, expressed predominantly in testis (at protein level). In embryos at 8 dpc, specifically expressed in the node, in particular within the pit cells that are located at the center of the node and have rotating monocilia on their apical surface. In the adult, expressed in epithelial cells of the trachea, brain ventricles, oviduct and testis.

The protein localises to the cytoplasm. It is found in the cytoskeleton. It localises to the cilium axoneme. Its subcellular location is the flagellum axoneme. The protein resides in the microtubule organizing center. The protein localises to the centrosome. It is found in the centriolar satellite. It localises to the spindle pole. Microtubule inner protein (MIP) part of the dynein-decorated doublet microtubules (DMTs) in cilia axoneme, which is required for motile cilia beating. Regulates motility patterns of both 9+0 and 9+2 motile cilia through differential localization and recruitment of axonemal dynein components. Required for centriolar satellite integrity and non-motile cilium assembly. Required for motile cilium formation. Through its role in the beating of primary cilia, involved in the establishment of organ laterality during embryogenesis. Required for sperm flagellum biogenesis and is essential for male fertility. The sequence is that of Cilia- and flagella-associated protein 53 from Mus musculus (Mouse).